A 397-amino-acid chain; its full sequence is Cysteine desulfurase (397 aa).

Residues N148, Q176, and 196-198 contribute to the pyridoxal 5'-phosphate site; that span reads SAH. N6-(pyridoxal phosphate)lysine is present on K199. T234 is a binding site for pyridoxal 5'-phosphate. The active-site Cysteine persulfide intermediate is the C321. [2Fe-2S] cluster is bound at residue C321.

It belongs to the class-V pyridoxal-phosphate-dependent aminotransferase family. NifS/IscS subfamily. Homodimer. Requires pyridoxal 5'-phosphate as cofactor.

The enzyme catalyses (sulfur carrier)-H + L-cysteine = (sulfur carrier)-SH + L-alanine. Functionally, catalyzes the removal of elemental sulfur atoms from cysteine to produce alanine. Seems to participate in the biosynthesis of the nitrogenase metalloclusters by providing the inorganic sulfur required for the Fe-S core formation. The sequence is that of Cysteine desulfurase from Klebsiella pneumoniae.